The following is a 204-amino-acid chain: DNA polymerase epsilon subunit D (204 aa).

Over residues 165 to 177 (KEVQRRRAEKTPA) the composition is skewed to basic and acidic residues. Positions 165–204 (KEVQRRRAEKTPAADEGQAEEGDAADEEEGSHKRAKLDEH) are disordered. Over residues 181–193 (GQAEEGDAADEEE) the composition is skewed to acidic residues. Residues 194 to 204 (GSHKRAKLDEH) are compositionally biased toward basic and acidic residues.

As to quaternary structure, heterotetramer. Consists of four subunits: POL2, DPB2, DPB3 and DPB4.

It is found in the nucleus. Functionally, as accessory component of the DNA polymerase epsilon (DNA polymerase II) participates in chromosomal DNA replication. This is DNA polymerase epsilon subunit D (DPB4) from Eremothecium gossypii (strain ATCC 10895 / CBS 109.51 / FGSC 9923 / NRRL Y-1056) (Yeast).